A 243-amino-acid chain; its full sequence is Probable 2-phosphosulfolactate phosphatase (243 aa).

This sequence belongs to the ComB family. Mg(2+) serves as cofactor.

The enzyme catalyses (2R)-O-phospho-3-sulfolactate + H2O = (2R)-3-sulfolactate + phosphate. This is Probable 2-phosphosulfolactate phosphatase from Prochlorococcus marinus (strain MIT 9313).